We begin with the raw amino-acid sequence, 285 residues long: HTH-type transcriptional regulator MurR (285 aa).

One can recognise an HTH rpiR-type domain in the interval 1-77; it reads MLYLTKISNA…MALIGEYSAS (77 aa). The segment at residues 37-56 is a DNA-binding region (H-T-H motif); the sequence is SRQMAKQLGISQSSIVKFAQ. Positions 128–268 constitute an SIS domain; that stretch reads IIEVISKAPF…FVGLVQLNDV (141 aa).

As to quaternary structure, homotetramer.

The protein operates within amino-sugar metabolism; N-acetylmuramate degradation [regulation]. In terms of biological role, represses the expression of the murPQ operon involved in the uptake and degradation of N-acetylmuramic acid (MurNAc). Binds to two adjacent inverted repeats within the operator region. MurNAc 6-phosphate, the substrate of MurQ, is the specific inducer that weakens binding of MurR to the operator. This Escherichia coli (strain K12 / MC4100 / BW2952) protein is HTH-type transcriptional regulator MurR.